The sequence spans 419 residues: Phosphoglycerate kinase (419 aa).

(2R)-3-phosphoglycerate contacts are provided by Val24, Asp25, Phe26, Asn27, Arg40, Ser63, His64, Gly66, Arg67, Leu122, Arg123, His169, and Arg170. Gly213 contacts ADP. Gly213 provides a ligand contact to CDP. Positions 214 and 215 each coordinate AMP. Ala214 provides a ligand contact to ATP. Ala214 serves as a coordination point for Mg(2+). The Mg(2+) site is built by Ala217 and Asp218. Asp218 lines the CDP pocket. Lys219 lines the AMP pocket. An ATP-binding site is contributed by Lys219. ADP is bound at residue Gly237. Gly237 is a binding site for CDP. 2 residues coordinate AMP: Gly238 and Gly313. ATP contacts are provided by Gly238 and Gly313. Residues Gly338 and Phe343 each contribute to the CDP site. Phe343 is a binding site for ADP. Residue Glu344 coordinates AMP. The ATP site is built by Glu344, Asp375, and Thr376. Asp375 is a Mg(2+) binding site.

The protein belongs to the phosphoglycerate kinase family. As to quaternary structure, monomer. Requires Mg(2+) as cofactor.

It catalyses the reaction (2R)-3-phosphoglycerate + ATP = (2R)-3-phospho-glyceroyl phosphate + ADP. The protein operates within carbohydrate degradation; glycolysis; pyruvate from D-glyceraldehyde 3-phosphate: step 2/5. The protein is Phosphoglycerate kinase (PGK) of Sterkiella nova (Ciliate).